Consider the following 520-residue polypeptide: Alpha-1B adrenergic receptor (520 aa).

At 1 to 45 (MNPDLDTGHNTSAPAHWGELKNANFTGPNQTSSNSTLPQLDITRA) the chain is on the extracellular side. 4 N-linked (GlcNAc...) asparagine glycosylation sites follow: asparagine 10, asparagine 24, asparagine 29, and asparagine 34. The chain crosses the membrane as a helical span at residues 46-70 (ISVGLVLGAFILFAIVGNILVILSV). The Cytoplasmic segment spans residues 71 to 83 (ACNRHLRTPTNYF). The chain crosses the membrane as a helical span at residues 84–105 (IVNLAMADLLLSFTVLPFSAAL). The Extracellular portion of the chain corresponds to 106–115 (EVLGYWVLGR). The helical transmembrane segment at 116-141 (IFCDIWAAVDVLCCTASILSLCAISI) threads the bilayer. Residues cysteine 118 and cysteine 195 are joined by a disulfide bond. Residues 142-161 (DRYIGVRYSLQYPTLVTRRK) are Cytoplasmic-facing. Residues 162–184 (AILALLSVWVLSTVISIGPLLGW) traverse the membrane as a helical segment. Residues 185–201 (KEPAPNDDKECGVTEEP) are Extracellular-facing. A helical membrane pass occupies residues 202–224 (FYALFSSLGSFYIPLAVILVMYC). The Cytoplasmic segment spans residues 225 to 295 (RVYIVAKRTT…FSREKKAAKT (71 aa)). The residue at position 264 (threonine 264) is a Phosphothreonine. A helical transmembrane segment spans residues 296–319 (LGIVVGMFILCWLPFFIALPLGSL). Over 320–326 (FSTLKPP) the chain is Extracellular. A helical transmembrane segment spans residues 327 to 351 (DAVFKVVFWLGYFNSCLNPIIYPCS). The Cytoplasmic segment spans residues 352-520 (SKEFKRAFVR…SNMPLAPGQF (169 aa)). Cysteine 365 carries the S-palmitoyl cysteine lipid modification. A Nuclear localization signal motif is present at residues 368–380 (RGRGRRRRRRRRR). Disordered regions lie at residues 394–432 (GGSLERSQSRKDSLDDSGSCLSGSQRTLPSASPSPGYLG) and 479–520 (LTEP…PGQF).

It belongs to the G-protein coupled receptor 1 family. Adrenergic receptor subfamily. ADRA1B sub-subfamily. In terms of assembly, homo- and heterooligomer. Heterooligomerizes with ADRA1B homooligomers in cardiac myocytes. Interacts with CAVIN4.

Its subcellular location is the nucleus membrane. It localises to the cell membrane. The protein resides in the cytoplasm. It is found in the membrane. The protein localises to the caveola. This alpha-adrenergic receptor mediates its action by association with G proteins that activate a phosphatidylinositol-calcium second messenger system. Its effect is mediated by G(q) and G(11) proteins. Nuclear ADRA1A-ADRA1B heterooligomers regulate phenylephrine (PE)-stimulated ERK signaling in cardiac myocytes. The sequence is that of Alpha-1B adrenergic receptor (ADRA1B) from Homo sapiens (Human).